The following is a 207-amino-acid chain: Thiamine-phosphate synthase (207 aa).

4-amino-2-methyl-5-(diphosphooxymethyl)pyrimidine contacts are provided by residues 36–40 and N68; that span reads QLRLK. D69 and D88 together coordinate Mg(2+). T107 contacts 4-amino-2-methyl-5-(diphosphooxymethyl)pyrimidine. 134 to 136 lines the 2-[(2R,5Z)-2-carboxy-4-methylthiazol-5(2H)-ylidene]ethyl phosphate pocket; the sequence is TGT. K137 serves as a coordination point for 4-amino-2-methyl-5-(diphosphooxymethyl)pyrimidine. G164 is a binding site for 2-[(2R,5Z)-2-carboxy-4-methylthiazol-5(2H)-ylidene]ethyl phosphate.

The protein belongs to the thiamine-phosphate synthase family. Mg(2+) is required as a cofactor.

It carries out the reaction 2-[(2R,5Z)-2-carboxy-4-methylthiazol-5(2H)-ylidene]ethyl phosphate + 4-amino-2-methyl-5-(diphosphooxymethyl)pyrimidine + 2 H(+) = thiamine phosphate + CO2 + diphosphate. It catalyses the reaction 2-(2-carboxy-4-methylthiazol-5-yl)ethyl phosphate + 4-amino-2-methyl-5-(diphosphooxymethyl)pyrimidine + 2 H(+) = thiamine phosphate + CO2 + diphosphate. The catalysed reaction is 4-methyl-5-(2-phosphooxyethyl)-thiazole + 4-amino-2-methyl-5-(diphosphooxymethyl)pyrimidine + H(+) = thiamine phosphate + diphosphate. The protein operates within cofactor biosynthesis; thiamine diphosphate biosynthesis; thiamine phosphate from 4-amino-2-methyl-5-diphosphomethylpyrimidine and 4-methyl-5-(2-phosphoethyl)-thiazole: step 1/1. In terms of biological role, condenses 4-methyl-5-(beta-hydroxyethyl)thiazole monophosphate (THZ-P) and 2-methyl-4-amino-5-hydroxymethyl pyrimidine pyrophosphate (HMP-PP) to form thiamine monophosphate (TMP). The polypeptide is Thiamine-phosphate synthase (Rhodospirillum centenum (strain ATCC 51521 / SW)).